Here is a 67-residue protein sequence, read N- to C-terminus: Large ribosomal subunit protein uL29 (67 aa).

The protein belongs to the universal ribosomal protein uL29 family.

This is Large ribosomal subunit protein uL29 from Clostridioides difficile (strain 630) (Peptoclostridium difficile).